A 378-amino-acid chain; its full sequence is Erythronate-4-phosphate dehydrogenase (378 aa).

Substrate-binding residues include S45 and T66. Residues D146 and T175 each coordinate NAD(+). R208 is an active-site residue. D232 contacts NAD(+). E237 is a catalytic residue. H254 serves as the catalytic Proton donor. G257 is a binding site for NAD(+). Y258 contacts substrate.

Belongs to the D-isomer specific 2-hydroxyacid dehydrogenase family. PdxB subfamily. Homodimer.

The protein resides in the cytoplasm. The enzyme catalyses 4-phospho-D-erythronate + NAD(+) = (R)-3-hydroxy-2-oxo-4-phosphooxybutanoate + NADH + H(+). Its pathway is cofactor biosynthesis; pyridoxine 5'-phosphate biosynthesis; pyridoxine 5'-phosphate from D-erythrose 4-phosphate: step 2/5. In terms of biological role, catalyzes the oxidation of erythronate-4-phosphate to 3-hydroxy-2-oxo-4-phosphonooxybutanoate. The polypeptide is Erythronate-4-phosphate dehydrogenase (Escherichia coli O139:H28 (strain E24377A / ETEC)).